Here is a 232-residue protein sequence, read N- to C-terminus: LRRN4 C-terminal-like protein (232 aa).

The first 22 residues, 1–22 (MPHSPCLLWLLAVTSLVPGTQP), serve as a signal peptide directing secretion. Topologically, residues 23–189 (LVAGDLEGDE…RLTVPPRPLT (167 aa)) are extracellular. The region spanning 77–172 (PPHPPRLGEV…GAEGLDSADG (96 aa)) is the Fibronectin type-III domain. Asn127 carries an N-linked (GlcNAc...) asparagine glycan. Residues 190–210 (LLHAAMGVGSALALLSCSALV) form a helical membrane-spanning segment. Residues 211 to 232 (WHFCLRQRWGCPRRGRPSHAGL) are Cytoplasmic-facing.

The protein localises to the membrane. The chain is LRRN4 C-terminal-like protein (LRRN4CL) from Bos taurus (Bovine).